We begin with the raw amino-acid sequence, 149 residues long: Calmodulin (149 aa).

Alanine 2 carries the N-acetylalanine modification. EF-hand domains are found at residues glutamate 8 to asparagine 43, proline 44 to aspartate 79, aspartate 81 to lysine 116, and leucine 117 to lysine 149. Residues aspartate 21, aspartate 23, aspartate 25, threonine 27, glutamate 32, aspartate 57, aspartate 59, asparagine 61, threonine 63, glutamate 68, aspartate 94, aspartate 96, asparagine 98, and glutamate 105 each coordinate Ca(2+). An N6,N6,N6-trimethyllysine modification is found at lysine 116. Ca(2+) is bound by residues aspartate 130, aspartate 132, aspartate 134, glutamine 136, and glutamate 141.

The protein belongs to the calmodulin family.

Functionally, calmodulin mediates the control of a large number of enzymes, ion channels and other proteins by Ca(2+). Among the enzymes to be stimulated by the calmodulin-Ca(2+) complex are a number of protein kinases and phosphatases. In Karlodinium veneficum (Dinoflagellate), this protein is Calmodulin.